Reading from the N-terminus, the 636-residue chain is Threonine--tRNA ligase (636 aa).

The TGS domain occupies 1-63 (MPMITITLPD…EHDASLRIIT (63 aa)). Residues 245-536 (DHRKIGKAQD…LIEHHAGAFP (292 aa)) are catalytic. Cys336, His387, and His513 together coordinate Zn(2+).

The protein belongs to the class-II aminoacyl-tRNA synthetase family. Homodimer. Requires Zn(2+) as cofactor.

The protein resides in the cytoplasm. The catalysed reaction is tRNA(Thr) + L-threonine + ATP = L-threonyl-tRNA(Thr) + AMP + diphosphate + H(+). Functionally, catalyzes the attachment of threonine to tRNA(Thr) in a two-step reaction: L-threonine is first activated by ATP to form Thr-AMP and then transferred to the acceptor end of tRNA(Thr). Also edits incorrectly charged L-seryl-tRNA(Thr). The protein is Threonine--tRNA ligase of Xanthomonas campestris pv. campestris (strain 8004).